Here is a 298-residue protein sequence, read N- to C-terminus: Acetylglutamate kinase (298 aa).

Residues 69-70 (GG), R91, and N196 contribute to the substrate site.

The protein belongs to the acetylglutamate kinase family. ArgB subfamily.

Its subcellular location is the cytoplasm. The catalysed reaction is N-acetyl-L-glutamate + ATP = N-acetyl-L-glutamyl 5-phosphate + ADP. The protein operates within amino-acid biosynthesis; L-arginine biosynthesis; N(2)-acetyl-L-ornithine from L-glutamate: step 2/4. Its function is as follows. Catalyzes the ATP-dependent phosphorylation of N-acetyl-L-glutamate. This chain is Acetylglutamate kinase, found in Bradyrhizobium sp. (strain BTAi1 / ATCC BAA-1182).